The primary structure comprises 201 residues: ATP-dependent Clp protease proteolytic subunit (201 aa).

Residue Ser100 is the Nucleophile of the active site. His125 is a catalytic residue.

This sequence belongs to the peptidase S14 family. Component of the chloroplastic Clp protease core complex.

It is found in the plastid. Its subcellular location is the chloroplast stroma. It carries out the reaction Hydrolysis of proteins to small peptides in the presence of ATP and magnesium. alpha-casein is the usual test substrate. In the absence of ATP, only oligopeptides shorter than five residues are hydrolyzed (such as succinyl-Leu-Tyr-|-NHMec, and Leu-Tyr-Leu-|-Tyr-Trp, in which cleavage of the -Tyr-|-Leu- and -Tyr-|-Trp bonds also occurs).. Cleaves peptides in various proteins in a process that requires ATP hydrolysis. Has a chymotrypsin-like activity. Plays a major role in the degradation of misfolded proteins. The polypeptide is ATP-dependent Clp protease proteolytic subunit (Chloranthus spicatus (Chulantree)).